The chain runs to 318 residues: Protoheme IX farnesyltransferase (318 aa).

Transmembrane regions (helical) follow at residues 31–51 (IILL…QGPL), 55–75 (LAIA…TLNC), 98–118 (IQPF…FILL), 125–145 (LAAG…THGL), 153–173 (IVIG…AVTG), 181–201 (ILFA…ALMI), 206–228 (AAVK…QILA), 238–260 (LALA…LLGL), and 285–305 (FSIF…LPGA).

The protein belongs to the UbiA prenyltransferase family. Protoheme IX farnesyltransferase subfamily.

The protein localises to the cell inner membrane. The catalysed reaction is heme b + (2E,6E)-farnesyl diphosphate + H2O = Fe(II)-heme o + diphosphate. Its pathway is porphyrin-containing compound metabolism; heme O biosynthesis; heme O from protoheme: step 1/1. Functionally, converts heme B (protoheme IX) to heme O by substitution of the vinyl group on carbon 2 of heme B porphyrin ring with a hydroxyethyl farnesyl side group. The chain is Protoheme IX farnesyltransferase from Synechococcus elongatus (strain ATCC 33912 / PCC 7942 / FACHB-805) (Anacystis nidulans R2).